The primary structure comprises 264 residues: Tritrans,polycis-undecaprenyl-diphosphate synthase (geranylgeranyl-diphosphate specific) (264 aa).

Residue D43 is part of the active site. D43 is a binding site for Mg(2+). Substrate is bound by residues 44–47, W48, H60, and 88–90; these read GNRR and STE. N91 acts as the Proton acceptor in catalysis. Substrate-binding positions include F92, R94, R213, and 219–221; that span reads RIS. Residue E232 coordinates Mg(2+).

This sequence belongs to the UPP synthase family. As to quaternary structure, homodimer. Mg(2+) is required as a cofactor.

It carries out the reaction geranylgeranyl diphosphate + 7 isopentenyl diphosphate = tri-trans,hepta-cis-undecaprenyl diphosphate + 7 diphosphate. Functionally, catalyzes the sequential condensation of isopentenyl diphosphate (IPP) with geranylgeranyl diphosphate (GGPP) to yield (2Z,6Z,10Z,14Z,18Z,22Z,26Z,30E,34E,38E)-undecaprenyl diphosphate (tritrans,heptacis-UPP). It is probably the precursor of glycosyl carrier lipids. This is Tritrans,polycis-undecaprenyl-diphosphate synthase (geranylgeranyl-diphosphate specific) from Thermococcus kodakarensis (strain ATCC BAA-918 / JCM 12380 / KOD1) (Pyrococcus kodakaraensis (strain KOD1)).